The sequence spans 390 residues: tRNA-specific 2-thiouridylase MnmA (390 aa).

Residues 29–36 (GLSGGVDS) and leucine 55 contribute to the ATP site. Cysteine 116 functions as the Nucleophile in the catalytic mechanism. A disulfide bond links cysteine 116 and cysteine 225. Glycine 141 is an ATP binding site. Positions 175–177 (KDQ) are interaction with tRNA. Catalysis depends on cysteine 225, which acts as the Cysteine persulfide intermediate. An interaction with tRNA region spans residues 330–331 (RY).

It belongs to the MnmA/TRMU family.

It is found in the cytoplasm. The enzyme catalyses S-sulfanyl-L-cysteinyl-[protein] + uridine(34) in tRNA + AH2 + ATP = 2-thiouridine(34) in tRNA + L-cysteinyl-[protein] + A + AMP + diphosphate + H(+). In terms of biological role, catalyzes the 2-thiolation of uridine at the wobble position (U34) of tRNA, leading to the formation of s(2)U34. This chain is tRNA-specific 2-thiouridylase MnmA, found in Prochlorococcus marinus (strain MIT 9515).